The following is a 160-amino-acid chain: Ureidoglycolate lyase (160 aa).

It belongs to the ureidoglycolate lyase family. As to quaternary structure, homodimer. It depends on Ni(2+) as a cofactor.

It catalyses the reaction (S)-ureidoglycolate = urea + glyoxylate. It participates in nitrogen metabolism; (S)-allantoin degradation. Its function is as follows. Catalyzes the catabolism of the allantoin degradation intermediate (S)-ureidoglycolate, generating urea and glyoxylate. Involved in the anaerobic utilization of allantoin as sole nitrogen source. Reinforces the induction of genes involved in the degradation of allantoin and glyoxylate by producing glyoxylate. The protein is Ureidoglycolate lyase of Escherichia coli (strain SMS-3-5 / SECEC).